Here is a 450-residue protein sequence, read N- to C-terminus: Chitobiosyldiphosphodolichol beta-mannosyltransferase (450 aa).

At 1-13 (MSWIQIPWSWVVT) the chain is on the lumenal side. Residues 14–34 (LIVTYLSLPLIIYYLVPYIFY) traverse the membrane as a helical segment. Residues 35-106 (GNKSSKKRII…PTLTLQGNKR (72 aa)) lie on the Cytoplasmic side of the membrane. The segment at residues 107–127 (SIIFLVKKVLFQVSAIIAQLW) is an intramembrane region (helical). The Cytoplasmic portion of the chain corresponds to 128–450 (ELRGSNYMLI…SAMQELKLVA (323 aa)).

The protein belongs to the glycosyltransferase group 1 family.

The protein localises to the endoplasmic reticulum membrane. The enzyme catalyses an N,N'-diacetylchitobiosyl-diphospho-di-trans,poly-cis-dolichol + GDP-alpha-D-mannose = a beta-D-Man-(1-&gt;4)-beta-D-GlcNAc-(1-&gt;4)-alpha-D-GlcNAc-diphospho-di-trans,poly-cis-dolichol + GDP + H(+). It participates in protein modification; protein glycosylation. Functionally, participates in the formation of the lipid-linked precursor oligosaccharide for N-glycosylation. Involved in assembling the dolichol-pyrophosphate-GlcNAc(2)-Man(5) intermediate on the cytoplasmic surface of the ER. The chain is Chitobiosyldiphosphodolichol beta-mannosyltransferase (ALG1) from Candida glabrata (strain ATCC 2001 / BCRC 20586 / JCM 3761 / NBRC 0622 / NRRL Y-65 / CBS 138) (Yeast).